Here is a 67-residue protein sequence, read N- to C-terminus: Large ribosomal subunit protein uL29 (67 aa).

It belongs to the universal ribosomal protein uL29 family.

The chain is Large ribosomal subunit protein uL29 from Methanosarcina acetivorans (strain ATCC 35395 / DSM 2834 / JCM 12185 / C2A).